Consider the following 335-residue polypeptide: Acetyl-coenzyme A carboxylase carboxyl transferase subunit alpha (335 aa).

The CoA carboxyltransferase C-terminal domain occupies 40–294; sequence QLETLATRRR…KASIERHLSE (255 aa).

The protein belongs to the AccA family. In terms of assembly, acetyl-CoA carboxylase is a heterohexamer composed of biotin carboxyl carrier protein (AccB), biotin carboxylase (AccC) and two subunits each of ACCase subunit alpha (AccA) and ACCase subunit beta (AccD).

It is found in the cytoplasm. It catalyses the reaction N(6)-carboxybiotinyl-L-lysyl-[protein] + acetyl-CoA = N(6)-biotinyl-L-lysyl-[protein] + malonyl-CoA. It functions in the pathway lipid metabolism; malonyl-CoA biosynthesis; malonyl-CoA from acetyl-CoA: step 1/1. Its function is as follows. Component of the acetyl coenzyme A carboxylase (ACC) complex. First, biotin carboxylase catalyzes the carboxylation of biotin on its carrier protein (BCCP) and then the CO(2) group is transferred by the carboxyltransferase to acetyl-CoA to form malonyl-CoA. In Prochlorococcus marinus (strain MIT 9515), this protein is Acetyl-coenzyme A carboxylase carboxyl transferase subunit alpha.